The following is a 445-amino-acid chain: Serine--tRNA ligase (445 aa).

250–252 is an L-serine binding site; that stretch reads TAE. 281-283 is an ATP binding site; it reads RAE. E304 serves as a coordination point for L-serine. 368 to 371 contributes to the ATP binding site; that stretch reads EISS. S404 contacts L-serine.

This sequence belongs to the class-II aminoacyl-tRNA synthetase family. Type-1 seryl-tRNA synthetase subfamily. As to quaternary structure, homodimer. The tRNA molecule binds across the dimer.

It is found in the cytoplasm. It carries out the reaction tRNA(Ser) + L-serine + ATP = L-seryl-tRNA(Ser) + AMP + diphosphate + H(+). The catalysed reaction is tRNA(Sec) + L-serine + ATP = L-seryl-tRNA(Sec) + AMP + diphosphate + H(+). It functions in the pathway aminoacyl-tRNA biosynthesis; selenocysteinyl-tRNA(Sec) biosynthesis; L-seryl-tRNA(Sec) from L-serine and tRNA(Sec): step 1/1. Its function is as follows. Catalyzes the attachment of serine to tRNA(Ser). Is also able to aminoacylate tRNA(Sec) with serine, to form the misacylated tRNA L-seryl-tRNA(Sec), which will be further converted into selenocysteinyl-tRNA(Sec). The sequence is that of Serine--tRNA ligase from Azorhizobium caulinodans (strain ATCC 43989 / DSM 5975 / JCM 20966 / LMG 6465 / NBRC 14845 / NCIMB 13405 / ORS 571).